Here is a 28-residue protein sequence, read N- to C-terminus: Apolipoprotein C-I (28 aa).

It belongs to the apolipoprotein C1 family.

Its subcellular location is the secreted. Functionally, inhibitor of lipoprotein binding to the low density lipoprotein (LDL) receptor, LDL receptor-related protein, and very low density lipoprotein (VLDL) receptor. Associates with high density lipoproteins (HDL) and the triacylglycerol-rich lipoproteins in the plasma and makes up about 10% of the protein of the VLDL and 2% of that of HDL. Appears to interfere directly with fatty acid uptake and is also the major plasma inhibitor of cholesteryl ester transfer protein (CETP). Binds free fatty acids and reduces their intracellular esterification. Modulates the interaction of APOE with beta-migrating VLDL and inhibits binding of beta-VLDL to the LDL receptor-related protein. In Oryctolagus cuniculus (Rabbit), this protein is Apolipoprotein C-I (APOC1).